The primary structure comprises 177 residues: Large ribosomal subunit protein uL5 (177 aa).

It belongs to the universal ribosomal protein uL5 family. As to quaternary structure, part of the 50S ribosomal subunit; part of the 5S rRNA/L5/L18/L25 subcomplex. Contacts the 5S rRNA and the P site tRNA. Forms a bridge to the 30S subunit in the 70S ribosome.

Functionally, this is one of the proteins that bind and probably mediate the attachment of the 5S RNA into the large ribosomal subunit, where it forms part of the central protuberance. In the 70S ribosome it contacts protein S13 of the 30S subunit (bridge B1b), connecting the 2 subunits; this bridge is implicated in subunit movement. Contacts the P site tRNA; the 5S rRNA and some of its associated proteins might help stabilize positioning of ribosome-bound tRNAs. The chain is Large ribosomal subunit protein uL5 from Wolbachia sp. subsp. Brugia malayi (strain TRS).